The sequence spans 121 residues: Small ribosomal subunit protein uS13 (121 aa).

Residues 92–121 (HKAGLPVRGQKTHSNARTRKGPRLTKIKKR) form a disordered region. Positions 101-121 (QKTHSNARTRKGPRLTKIKKR) are enriched in basic residues.

It belongs to the universal ribosomal protein uS13 family. As to quaternary structure, part of the 30S ribosomal subunit. Forms a loose heterodimer with protein S19. Forms two bridges to the 50S subunit in the 70S ribosome.

Functionally, located at the top of the head of the 30S subunit, it contacts several helices of the 16S rRNA. In the 70S ribosome it contacts the 23S rRNA (bridge B1a) and protein L5 of the 50S subunit (bridge B1b), connecting the 2 subunits; these bridges are implicated in subunit movement. Contacts the tRNAs in the A and P-sites. The polypeptide is Small ribosomal subunit protein uS13 (Petrotoga mobilis (strain DSM 10674 / SJ95)).